Reading from the N-terminus, the 639-residue chain is Testicular spindle-associated protein SHCBP1L (639 aa).

2 disordered regions span residues 1 to 25 and 48 to 75; these read MESD…EQTV and VASP…ETCD. Ser3 is modified (O-acetylserine). Phosphoserine is present on residues Ser8, Ser19, and Ser50. Residues 54–63 show a composition bias toward basic residues; sequence VKGKAARRRL. Positions 285–312 form a coiled coil; it reads IAQRFKKTLEKYKNKRVELIEYQSNIKE. PbH1 repeat units lie at residues 479–500, 501–523, 524–557, and 560–582; these read SGHL…CVLT, GASL…ELYP, GSIA…NMKV, and APKL…SILQ. Lys556 carries the post-translational modification N6-acetyllysine. Lys631 carries the post-translational modification N6-acetyllysine.

As to quaternary structure, interacts with HSPA2; this interaction may promote the recruitment of HSPA2 to the spindle. In terms of tissue distribution, expressed in pachytene spermatocytes and elongating spermatids inside the seminiferous tubules. Not detected in ovary (at protein level). Testis-specific.

It is found in the cytoplasm. It localises to the cytoskeleton. The protein localises to the spindle. Its function is as follows. Testis-specific spindle-associated factor that plays a role in spermatogenesis. In association with HSPA2, participates in the maintenance of spindle integrity during meiosis in male germ cells. The chain is Testicular spindle-associated protein SHCBP1L from Mus musculus (Mouse).